Here is a 355-residue protein sequence, read N- to C-terminus: Uroporphyrinogen decarboxylase (355 aa).

Substrate contacts are provided by residues 36 to 40 (RQAGR), aspartate 85, tyrosine 160, serine 215, and histidine 334.

It belongs to the uroporphyrinogen decarboxylase family. Homodimer.

The protein localises to the cytoplasm. The catalysed reaction is uroporphyrinogen III + 4 H(+) = coproporphyrinogen III + 4 CO2. It participates in porphyrin-containing compound metabolism; protoporphyrin-IX biosynthesis; coproporphyrinogen-III from 5-aminolevulinate: step 4/4. Its function is as follows. Catalyzes the decarboxylation of four acetate groups of uroporphyrinogen-III to yield coproporphyrinogen-III. The chain is Uroporphyrinogen decarboxylase from Rhodococcus jostii (strain RHA1).